The primary structure comprises 726 residues: Dipeptidyl-peptidase 5 (726 aa).

An N-terminal signal peptide occupies residues 1 to 19 (MAAAKWLIASLAFASSGLA). N-linked (GlcNAc...) asparagine glycosylation is found at Asn96 and Asn252. The interval 269-291 (AEPINKRNGPRTPQGIEGASSSP) is disordered. Ser558 acts as the Charge relay system in catalysis. A glycan (N-linked (GlcNAc...) asparagine) is linked at Asn605. Residues Asp641 and His673 each act as charge relay system in the active site. Asn699 carries N-linked (GlcNAc...) asparagine glycosylation.

It belongs to the peptidase S9C family.

It is found in the secreted. The chain is Dipeptidyl-peptidase 5 (DPPV) from Arthroderma benhamiae (Trichophyton mentagrophytes).